Here is a 195-residue protein sequence, read N- to C-terminus: Heavy metal-associated isoprenylated plant protein 18 (195 aa).

Disordered regions lie at residues 36–76 (DVVQ…KPET) and 145–172 (EKEK…NPSS). Basic and acidic residues-rich tracts occupy residues 47 to 76 (TVTK…KPET) and 145 to 157 (EKEK…ITKD). The HMA domain maps to 78 to 149 (TRKLEIHIAF…RIVKMEKEKK (72 aa)). The residue at position 192 (C192) is a Cysteine methyl ester. C192 carries S-farnesyl cysteine lipidation. Residues 193-195 (SIS) constitute a propeptide, removed in mature form.

It belongs to the HIPP family.

Its function is as follows. Probable heavy-metal-binding protein. Required for female gametophyte development and function. This Arabidopsis thaliana (Mouse-ear cress) protein is Heavy metal-associated isoprenylated plant protein 18.